Reading from the N-terminus, the 134-residue chain is Large ribosomal subunit protein uL16c (134 aa).

This sequence belongs to the universal ribosomal protein uL16 family. In terms of assembly, part of the 50S ribosomal subunit.

It localises to the plastid. It is found in the chloroplast. The chain is Large ribosomal subunit protein uL16c from Guillardia theta (Cryptophyte).